A 393-amino-acid chain; its full sequence is Histidinol dehydrogenase (393 aa).

Positions 112, 171, and 194 each coordinate NAD(+). 3 residues coordinate substrate: threonine 217, glutamine 239, and histidine 242. Residues glutamine 239 and histidine 242 each contribute to the Zn(2+) site. Residues glutamate 293 and histidine 294 each act as proton acceptor in the active site. Histidine 294, aspartate 326, glutamate 379, and histidine 384 together coordinate substrate. Aspartate 326 contacts Zn(2+). Position 384 (histidine 384) interacts with Zn(2+).

This sequence belongs to the histidinol dehydrogenase family. Zn(2+) serves as cofactor.

It catalyses the reaction L-histidinol + 2 NAD(+) + H2O = L-histidine + 2 NADH + 3 H(+). Its pathway is amino-acid biosynthesis; L-histidine biosynthesis; L-histidine from 5-phospho-alpha-D-ribose 1-diphosphate: step 9/9. Functionally, catalyzes the sequential NAD-dependent oxidations of L-histidinol to L-histidinaldehyde and then to L-histidine. The chain is Histidinol dehydrogenase from Sulfolobus acidocaldarius (strain ATCC 33909 / DSM 639 / JCM 8929 / NBRC 15157 / NCIMB 11770).